A 204-amino-acid chain; its full sequence is Large ribosomal subunit protein uL4 (204 aa).

The tract at residues 49–76 (KTKGISDVSGTTAKPYGQKRTGRARQGS) is disordered.

The protein belongs to the universal ribosomal protein uL4 family. Part of the 50S ribosomal subunit.

In terms of biological role, one of the primary rRNA binding proteins, this protein initially binds near the 5'-end of the 23S rRNA. It is important during the early stages of 50S assembly. It makes multiple contacts with different domains of the 23S rRNA in the assembled 50S subunit and ribosome. Its function is as follows. Forms part of the polypeptide exit tunnel. The protein is Large ribosomal subunit protein uL4 of Wolbachia pipientis wMel.